We begin with the raw amino-acid sequence, 599 residues long: ATP-dependent rRNA helicase SPB4 (599 aa).

The Q motif motif lies at 7–35 (WDTLDYTLQPWIRTAVDAMGYETMTPVQA). Positions 38–224 (IPLFARNKDV…KTGMRNPVKV (187 aa)) constitute a Helicase ATP-binding domain. Position 51-58 (51-58 (SVTGSGKT)) interacts with ATP. Residues 172-175 (DEAD) carry the DEAD box motif. Positions 248–415 (KLQLLLTLLN…GLPEIIRAWI (168 aa)) constitute a Helicase C-terminal domain. Positions 501–561 (QREKARKLAK…LKRKAIEEKL (61 aa)) form a coiled coil. The interval 559 to 599 (EKLIENSDDSDNEVETDWKDIVRQRKKKKTNSGMQGDFGDL) is disordered. A compositionally biased stretch (acidic residues) spans 564–573 (NSDDSDNEVE).

It belongs to the DEAD box helicase family. DDX55/SPB4 subfamily. As to quaternary structure, component of pre-60S ribosomal complexes.

It localises to the nucleus. It is found in the nucleolus. It carries out the reaction ATP + H2O = ADP + phosphate + H(+). Functionally, ATP-binding RNA helicase involved in the biogenesis of 60S ribosomal subunits. Binds 90S pre-ribosomal particles and dissociates from pre-60S ribosomal particles after processing of 27SB pre-rRNA. Required for the normal formation of 18S rRNA through the processing of pre-rRNAs at sites A0, A1 and A2, and the normal formation of 25S and 5.8S rRNAs through the processing of pre-rRNAs at sites C1 and C2. This chain is ATP-dependent rRNA helicase SPB4, found in Eremothecium gossypii (strain ATCC 10895 / CBS 109.51 / FGSC 9923 / NRRL Y-1056) (Yeast).